Reading from the N-terminus, the 368-residue chain is MARTITFDIPSQYKLVDLIGEGAYGTVCSAIHKPSGIKVAIKKIQPFSKKLFVTRTIREIKLLRYFHEHENIISILDKVRPVSIDKLNAVYLVEELMETDLQKVINNQNSGFSTLSDDHVQYFTYQILRALKSIHSAQVIHRDIKPSNLLLNSNCDLKVCDFGLARCLASSSDSRETLVGFMTEYVATRWYRAPEIMLTFQEYTTAMDIWSCGCILAEMVSGKPLFPGRDYHHQLWLILEVLGTPSFEDFNQIKSKRAKEYIANLPMRPPLPWETVWSKTDLNPDMIDLLDKMLQFNPDKRISAAEALRHPYLAMYHDPSDEPEYPPLNLDDEFWKLDNKIMRPEEEEEVPIEMLKDMLYDELMKTME.

Positions 13–313 (YKLVDLIGEG…AAEALRHPYL (301 aa)) constitute a Protein kinase domain. Residues 19 to 27 (IGEGAYGTV) and Lys42 contribute to the ATP site. Asp143 (proton acceptor) is an active-site residue. Residue Thr183 is modified to Phosphothreonine. The TXY signature appears at 183-185 (TEY). Tyr185 bears the Phosphotyrosine mark.

Belongs to the protein kinase superfamily. Ser/Thr protein kinase family. MAP kinase subfamily. HOG1 sub-subfamily. As to quaternary structure, in the nucleus, KSS1 forms a complex with DIG1, DIG2 and STE12; in contrast to FUS3 the interaction of KSS1 with STE12 does not depend on DIG1 and DIG2. Phosphorylated KSS1 shows reduced interaction with STE12. During pheromone activation and phosphorylation, KSS1 forms a membrane-associated complex with the scaffold protein STE5, the MAPKK STE7, the MAPKKK STE11, and the G-protein beta subunit GBB/STE4; interacting directly with POF1, STE7 and STE5 proteins. Mg(2+) serves as cofactor. Post-translationally, dually phosphorylated on Thr-183 and Tyr-185 by STE7 in response to pheromone or carbon/nitrogen limitation, which activates the enzyme. Activated FUS3 down-regulates KSS1 phosphorylation.

It is found in the nucleus. The protein localises to the cytoplasm. The protein resides in the periplasm. The catalysed reaction is L-seryl-[protein] + ATP = O-phospho-L-seryl-[protein] + ADP + H(+). The enzyme catalyses L-threonyl-[protein] + ATP = O-phospho-L-threonyl-[protein] + ADP + H(+). With respect to regulation, activated by tyrosine and threonine phosphorylation after pheromone treatment or carbon/nitrogen limitation. In terms of biological role, together with closely related FUS3, KSS1 is the final kinase in the signal transduction cascade regulating activation/repression of the mating and filamentation pathways, induced by pheromone and nitrogen/carbon limitation, respectively. Phosphorylated KSS1 activates both pathways, whereas activated FUS3 activates the mating but suppresses the filamentation pathway. KSS1 activity is down-regulated by FUS3 during pheromone induction to prevent inappropriate activation of the filamentation pathway. During induction of filamentation, KSS1 activates the transcription factor STE12 resulting in its binding to and activation of filamentation specific genes. Non-activated KSS1 has a kinase-independent repressive effect on STE12 transcriptional activity, that is mediated by direct binding to STE12 and depends on the presence of DIG1 and DIG2, and that is required for the suppression of filamentation under normal growth conditions. SSN3/SRB10 contributes further to the suppression of filamentation under these conditions by reducing STE12 stability independent of KSS1. FUS3 can partially compensate for the lack of KSS1 but filamentation becomes constitutively induced at a low level in the absence of any signal. KSS1 phosphorylates STE7, STE5, FAR1, DIG1, DIG2, STE12, and SST2. The chain is Mitogen-activated protein kinase KSS1 (KSS1) from Saccharomyces cerevisiae (strain ATCC 204508 / S288c) (Baker's yeast).